A 150-amino-acid polypeptide reads, in one-letter code: UPF0178 protein Daro_2879 (150 aa).

Belongs to the UPF0178 family.

The polypeptide is UPF0178 protein Daro_2879 (Dechloromonas aromatica (strain RCB)).